The primary structure comprises 466 residues: Asparagine--tRNA ligase (466 aa).

It belongs to the class-II aminoacyl-tRNA synthetase family. Homodimer.

The protein resides in the cytoplasm. The enzyme catalyses tRNA(Asn) + L-asparagine + ATP = L-asparaginyl-tRNA(Asn) + AMP + diphosphate + H(+). This Vibrio cholerae serotype O1 (strain ATCC 39315 / El Tor Inaba N16961) protein is Asparagine--tRNA ligase.